The following is a 914-amino-acid chain: Protein translocase subunit SecA (914 aa).

Residues Q87, 105–109 (GEGKT), and D500 each bind ATP. Zn(2+) is bound by residues C898, C900, C909, and H910.

It belongs to the SecA family. Monomer and homodimer. Part of the essential Sec protein translocation apparatus which comprises SecA, SecYEG and auxiliary proteins SecDF-YajC and YidC. The cofactor is Zn(2+).

It localises to the cell inner membrane. Its subcellular location is the cytoplasm. The enzyme catalyses ATP + H2O + cellular proteinSide 1 = ADP + phosphate + cellular proteinSide 2.. In terms of biological role, part of the Sec protein translocase complex. Interacts with the SecYEG preprotein conducting channel. Has a central role in coupling the hydrolysis of ATP to the transfer of proteins into and across the cell membrane, serving as an ATP-driven molecular motor driving the stepwise translocation of polypeptide chains across the membrane. The polypeptide is Protein translocase subunit SecA (Acidithiobacillus ferrooxidans (strain ATCC 23270 / DSM 14882 / CIP 104768 / NCIMB 8455) (Ferrobacillus ferrooxidans (strain ATCC 23270))).